The sequence spans 90 residues: Probable Fe(2+)-trafficking protein (90 aa).

The protein belongs to the Fe(2+)-trafficking protein family.

Could be a mediator in iron transactions between iron acquisition and iron-requiring processes, such as synthesis and/or repair of Fe-S clusters in biosynthetic enzymes. The polypeptide is Probable Fe(2+)-trafficking protein (Saccharophagus degradans (strain 2-40 / ATCC 43961 / DSM 17024)).